A 37-amino-acid chain; its full sequence is Cytochrome b6-f complex subunit 5 (37 aa).

Residues 5–25 form a helical membrane-spanning segment; that stretch reads LLSGIVLGLIPITLAGLFVTA.

Belongs to the PetG family. The 4 large subunits of the cytochrome b6-f complex are cytochrome b6, subunit IV (17 kDa polypeptide, PetD), cytochrome f and the Rieske protein, while the 4 small subunits are PetG, PetL, PetM and PetN. The complex functions as a dimer.

It is found in the plastid. The protein resides in the chloroplast thylakoid membrane. Functionally, component of the cytochrome b6-f complex, which mediates electron transfer between photosystem II (PSII) and photosystem I (PSI), cyclic electron flow around PSI, and state transitions. PetG is required for either the stability or assembly of the cytochrome b6-f complex. This Cryptomeria japonica (Japanese cedar) protein is Cytochrome b6-f complex subunit 5.